The primary structure comprises 103 residues: Entry-fusion complex protein OPG086 (103 aa).

A helical; Signal-anchor transmembrane segment spans residues 1–21 (MTLFLVIFFILFLLLCYFFSF). Residues 22–103 (KRTNKMEIGI…KLVPTLLLSK (82 aa)) are Virion surface-facing.

The protein belongs to the orthopoxvirus OPG086 family. In terms of assembly, interacts with OPG099/L5. Component of the entry fusion complex (EFC) composed of OPG053, OPG076, OPG086, OPG094, OPG095, OPG099, OPG107, OPG143, OPG104, OPG147 and OPG155. Except for OPG095 and OPG053, each of the EFC proteins is required for assembly or stability of the complex. In terms of processing, unglycosylated because produced in viral factories instead of the classic ER -Golgi route.

It is found in the virion membrane. Functionally, component of the entry fusion complex (EFC), which consists of 11 proteins. During cell infection, this complex mediates entry of the virion core into the host cytoplasm by a two-step mechanism consisting of lipid mixing of the viral and cellular membranes and subsequent pore formation. This chain is Entry-fusion complex protein OPG086 (OPG086), found in Vertebrata (FPV).